A 1344-amino-acid polypeptide reads, in one-letter code: Centrosomal P4.1-associated protein (1344 aa).

2 disordered regions span residues 67–123 (SSEE…NNDL) and 187–225 (PGTL…ASNV). Residues 211–225 (SYSNPTQENSCASNV) are compositionally biased toward polar residues. At S248 the chain carries Phosphoserine. The tract at residues 257 to 300 (QEAHVKRNDLKEESPAHPSGEGALPRWEKKMGRSQEGKDVNLQK) is disordered. Basic and acidic residues-rich tracts occupy residues 259–271 (AHVK…EESP) and 282–297 (RWEK…KDVN). The residue at position 304 (S304) is a Phosphoserine. An alpha/beta-tubulin binding region spans residues 307 to 382 (VVNIDERPIK…FTNAKSKFQK (76 aa)). 2 disordered regions span residues 347–407 (QEAE…DRQH) and 425–470 (TVKK…KKRD). Polar residues predominate over residues 388-398 (LASTQSPSEDQ). S528 carries the phosphoserine modification. 2 positions are modified to phosphoserine; by PLK2: S577 and S583. Disordered regions lie at residues 600 to 626 (RLSS…SNCS) and 672 to 735 (TSEI…DTGA). Positions 709-720 (VGDRVFSNREDS) are enriched in basic and acidic residues. A Phosphoserine modification is found at S748. The tract at residues 887-1344 (QPPEFMVCFI…DGNVLMDTEM (458 aa)) is interaction with STIL. The segment at 1105 to 1133 (QGNLSRRIKSAPPRDLGSSDKGQAALPRE) is disordered.

This sequence belongs to the TCP10 family. As to quaternary structure, forms homodimers. Associates with microtubules plus ends; binds to beta-tubulin subunits exposed on microtubule outer surface at its distal tip; also associates with microtubule lattice. Associated with the gamma-tubulin complex. Interacts with the head domain of EPB41. Interacts with LYST. Interacts with CEP152 (via C-terminus). Interacts with STIL. Forms a complex with STIL and SASS6. Post-translationally, phosphorylation at Ser-577 and Ser-583 by PLK2 is required for procentriole formation and centriole elongation. Phosphorylation by PLK2 oscillates during the cell cycle: it increases at G1/S transition and decreases during the exit from mitosis. Phosphorylation at Ser-583 is also mediated by PLK4 but is not a critical step in PLK4 function in procentriole assembly.

It localises to the cytoplasm. It is found in the cytoskeleton. Its subcellular location is the microtubule organizing center. The protein resides in the centrosome. The protein localises to the centriole. Functionally, plays an important role in cell division and centrosome function by participating in centriole duplication. Inhibits microtubule nucleation from the centrosome. Involved in the regulation of slow processive growth of centriolar microtubules. Acts as microtubule plus-end tracking protein that stabilizes centriolar microtubules and inhibits microtubule polymerization and extension from the distal ends of centrioles. Required for centriole elongation and for STIL-mediated centriole amplification. Required for the recruitment of CEP295 to the proximal end of new-born centrioles at the centriolar microtubule wall during early S phase in a PLK4-dependent manner. May be involved in the control of centriolar-microtubule growth by acting as a regulator of tubulin release. The sequence is that of Centrosomal P4.1-associated protein (Cpap) from Mus musculus (Mouse).